The following is a 1203-amino-acid chain: DNA-directed RNA polymerase subunit beta (1203 aa).

Residues 1174-1195 (AAQEAKAAFEAEEAEKATKAEA) show a composition bias toward basic and acidic residues. The disordered stretch occupies residues 1174–1203 (AAQEAKAAFEAEEAEKATKAEATEEAAEQE).

The protein belongs to the RNA polymerase beta chain family. As to quaternary structure, the RNAP catalytic core consists of 2 alpha, 1 beta, 1 beta' and 1 omega subunit. When a sigma factor is associated with the core the holoenzyme is formed, which can initiate transcription.

The catalysed reaction is RNA(n) + a ribonucleoside 5'-triphosphate = RNA(n+1) + diphosphate. In terms of biological role, DNA-dependent RNA polymerase catalyzes the transcription of DNA into RNA using the four ribonucleoside triphosphates as substrates. The chain is DNA-directed RNA polymerase subunit beta from Streptococcus pneumoniae (strain JJA).